We begin with the raw amino-acid sequence, 319 residues long: Lipoyl synthase (319 aa).

Positions methionine 1–serine 28 are disordered. A compositionally biased stretch (basic and acidic residues) spans arginine 16–serine 28. [4Fe-4S] cluster-binding residues include cysteine 61, cysteine 66, cysteine 72, cysteine 87, cysteine 91, cysteine 94, and serine 300. The 217-residue stretch at tryptophan 73–leucine 289 folds into the Radical SAM core domain.

It belongs to the radical SAM superfamily. Lipoyl synthase family. It depends on [4Fe-4S] cluster as a cofactor.

It is found in the cytoplasm. It catalyses the reaction [[Fe-S] cluster scaffold protein carrying a second [4Fe-4S](2+) cluster] + N(6)-octanoyl-L-lysyl-[protein] + 2 oxidized [2Fe-2S]-[ferredoxin] + 2 S-adenosyl-L-methionine + 4 H(+) = [[Fe-S] cluster scaffold protein] + N(6)-[(R)-dihydrolipoyl]-L-lysyl-[protein] + 4 Fe(3+) + 2 hydrogen sulfide + 2 5'-deoxyadenosine + 2 L-methionine + 2 reduced [2Fe-2S]-[ferredoxin]. It functions in the pathway protein modification; protein lipoylation via endogenous pathway; protein N(6)-(lipoyl)lysine from octanoyl-[acyl-carrier-protein]: step 2/2. In terms of biological role, catalyzes the radical-mediated insertion of two sulfur atoms into the C-6 and C-8 positions of the octanoyl moiety bound to the lipoyl domains of lipoate-dependent enzymes, thereby converting the octanoylated domains into lipoylated derivatives. The polypeptide is Lipoyl synthase (Rhodopseudomonas palustris (strain HaA2)).